Here is a 455-residue protein sequence, read N- to C-terminus: MFS-type transporter SLC18B1 (455 aa).

M1 bears the N-acetylmethionine mark. Residues 1–26 are disordered; the sequence is MDTAGPPAPAGTEGDGPGGSTGETSR. Residues 1–32 are Cytoplasmic-facing; it reads MDTAGPPAPAGTEGDGPGGSTGETSRRLSKEQ. A Phosphoserine modification is found at S20. Residues 33-53 traverse the membrane as a helical segment; that stretch reads IFVLVSAASMNLGCMMTYSIL. The Extracellular portion of the chain corresponds to 54 to 69; that stretch reads GPFFPKEAEKKGASNT. The helical transmembrane segment at 70-90 threads the bilayer; that stretch reads TIGMIFGCYALFELLASLVFG. The Cytoplasmic portion of the chain corresponds to 91–99; the sequence is KYLVHIGAK. A helical membrane pass occupies residues 100-120; sequence FMFIAGMFVSGGVTILFGVLD. Residues 121-126 are Extracellular-facing; the sequence is QLPEGP. The helical transmembrane segment at 127-147 threads the bilayer; sequence IFIAMCFLVRIVDAIGFGAAI. At 148 to 166 the chain is on the cytoplasmic side; that stretch reads TASSSILAKAFPNNVATVM. The chain crosses the membrane as a helical span at residues 167–187; the sequence is GSLEVFSGLGLVAGPPLGGLL. Residues 188–194 are Extracellular-facing; the sequence is YQSFGYE. The chain crosses the membrane as a helical span at residues 195-215; that stretch reads VPFIFLGCIVLLMIPLNLCIL. The Cytoplasmic segment spans residues 216-232; the sequence is PSYESDAGKQSFWKLVT. Residues 233-253 form a helical membrane-spanning segment; that stretch reads LPKIGLIAFVIISLSSCFGFL. The Extracellular segment spans residues 254–271; sequence DPTLSLFVMKKFSLSTGY. A helical transmembrane segment spans residues 272 to 292; it reads VGLVFLGLSLSYAISSPLFGL. At 293-303 the chain is on the cytoplasmic side; the sequence is LSDKMPNLRKW. A helical membrane pass occupies residues 304-324; the sequence is FLVFGNLITAGCYMLLGPIPL. The Extracellular segment spans residues 325 to 330; that stretch reads LHIKSQ. A helical membrane pass occupies residues 331–351; that stretch reads LWLLVLVLVINGVSAGMSIIP. The Cytoplasmic segment spans residues 352 to 376; sequence TFPEMLSCAYANGFEDGISTLGLVS. The chain crosses the membrane as a helical span at residues 377–397; it reads GLFGAMWSVGAFMGPILGGFL. The Extracellular portion of the chain corresponds to 398–406; that stretch reads CEKIGFEWA. A helical transmembrane segment spans residues 407-427; the sequence is AAIQGLWTLLSGVAMALFYLW. The Cytoplasmic segment spans residues 428 to 455; it reads EDSTMRRSKAQNILGTEEEQAALLPNDT.

Expressed in brain structures, particularly in hippocampus, cortex, and cerebellum (at protein level). Expressed in astrocytes and hippocampal neurons (at protein level). Expressed in peritoneal mast cells.

The protein localises to the cytoplasmic vesicle. Its subcellular location is the secretory vesicle membrane. It localises to the secretory vesicle. The protein resides in the synaptic vesicle membrane. The catalysed reaction is spermine(in) + n H(+)(out) = spermine(out) + n H(+)(in). It carries out the reaction spermidine(in) + n H(+)(out) = spermidine(out) + n H(+)(in). It catalyses the reaction serotonin(in) + n H(+)(out) = serotonin(out) + n H(+)(in). Functionally, proton-coupled polyamine antiporter involved in the translocation of polyamines from cytosol into secretory vesicles prior to their release via exocytosis. Uses the electrochemical proton gradient generated by a V-type proton-pumping ATPase to couple the efflux of protons with the uptake of a polyamine molecule. Facilitates vesicular storage of spermine and spermidine in astrocytes with an impact on glutamatergic neuronal transmission and memory formation. Upon antigen stimulation, regulates polyamine accumulation and release in mast cell secretory granules, which in turn potentiates mast cell degranulation and histamine secretion. This is MFS-type transporter SLC18B1 from Rattus norvegicus (Rat).